We begin with the raw amino-acid sequence, 24 residues long: Cytochrome c oxidase subunit 5A-2, mitochondrial (24 aa).

It belongs to the cytochrome c oxidase subunit 5A family. Component of the cytochrome c oxidase (complex IV, CIV), a multisubunit enzyme composed of 14 subunits. The complex is composed of a catalytic core of 3 subunits MT-CO1, MT-CO2 and MT-CO3, encoded in the mitochondrial DNA, and 11 supernumerary subunits COX4I, COX5A, COX5B, COX6A, COX6B, COX6C, COX7A, COX7B, COX7C, COX8 and NDUFA4, which are encoded in the nuclear genome. The complex exists as a monomer or a dimer and forms supercomplexes (SCs) in the inner mitochondrial membrane with NADH-ubiquinone oxidoreductase (complex I, CI) and ubiquinol-cytochrome c oxidoreductase (cytochrome b-c1 complex, complex III, CIII), resulting in different assemblies (supercomplex SCI(1)III(2)IV(1) and megacomplex MCI(2)III(2)IV(2)).

The protein localises to the mitochondrion inner membrane. The protein operates within energy metabolism; oxidative phosphorylation. Functionally, component of the cytochrome c oxidase, the last enzyme in the mitochondrial electron transport chain which drives oxidative phosphorylation. The respiratory chain contains 3 multisubunit complexes succinate dehydrogenase (complex II, CII), ubiquinol-cytochrome c oxidoreductase (cytochrome b-c1 complex, complex III, CIII) and cytochrome c oxidase (complex IV, CIV), that cooperate to transfer electrons derived from NADH and succinate to molecular oxygen, creating an electrochemical gradient over the inner membrane that drives transmembrane transport and the ATP synthase. Cytochrome c oxidase is the component of the respiratory chain that catalyzes the reduction of oxygen to water. Electrons originating from reduced cytochrome c in the intermembrane space (IMS) are transferred via the dinuclear copper A center (CU(A)) of subunit 2 and heme A of subunit 1 to the active site in subunit 1, a binuclear center (BNC) formed by heme A3 and copper B (CU(B)). The BNC reduces molecular oxygen to 2 water molecules using 4 electrons from cytochrome c in the IMS and 4 protons from the mitochondrial matrix. In Thunnus obesus (Bigeye tuna), this protein is Cytochrome c oxidase subunit 5A-2, mitochondrial.